We begin with the raw amino-acid sequence, 247 residues long: 14-3-3 protein gamma (247 aa).

The protein belongs to the 14-3-3 family. As to quaternary structure, homodimer, and heterodimer with other family members.

It is found in the cytoplasm. Its function is as follows. Adapter protein implicated in the regulation of a large spectrum of both general and specialized signaling pathways. Binds to a large number of partners, usually by recognition of a phosphoserine or phosphothreonine motif. Binding generally results in the modulation of the activity of the binding partner. This is 14-3-3 protein gamma (YWHAG) from Gallus gallus (Chicken).